The chain runs to 361 residues: Histidinol-phosphate aminotransferase (361 aa).

At Lys219 the chain carries N6-(pyridoxal phosphate)lysine.

Belongs to the class-II pyridoxal-phosphate-dependent aminotransferase family. Histidinol-phosphate aminotransferase subfamily. In terms of assembly, homodimer. Requires pyridoxal 5'-phosphate as cofactor.

It carries out the reaction L-histidinol phosphate + 2-oxoglutarate = 3-(imidazol-4-yl)-2-oxopropyl phosphate + L-glutamate. It participates in amino-acid biosynthesis; L-histidine biosynthesis; L-histidine from 5-phospho-alpha-D-ribose 1-diphosphate: step 7/9. In Acinetobacter baumannii (strain SDF), this protein is Histidinol-phosphate aminotransferase.